A 450-amino-acid polypeptide reads, in one-letter code: Phosphoglucosamine mutase (450 aa).

The active-site Phosphoserine intermediate is S102. Mg(2+)-binding residues include S102, D243, D245, and D247. The residue at position 102 (S102) is a Phosphoserine.

This sequence belongs to the phosphohexose mutase family. Requires Mg(2+) as cofactor. In terms of processing, activated by phosphorylation.

It carries out the reaction alpha-D-glucosamine 1-phosphate = D-glucosamine 6-phosphate. Functionally, catalyzes the conversion of glucosamine-6-phosphate to glucosamine-1-phosphate. This chain is Phosphoglucosamine mutase, found in Rhizobium etli (strain CIAT 652).